A 679-amino-acid chain; its full sequence is Glutamine-dependent NAD(+) synthetase (679 aa).

A CN hydrolase domain is found at 12–276 (VRVAACTHHT…VRRSVADVDT (265 aa)). Glu-52 functions as the Proton acceptor; for glutaminase activity in the catalytic mechanism. Lys-121 (for glutaminase activity) is an active-site residue. Residue Tyr-127 participates in L-glutamine binding. Cys-176 acts as the Nucleophile; for glutaminase activity in catalysis. Positions 203 and 209 each coordinate L-glutamine. The interval 337 to 679 (QQDCYEAYNI…DQIDREVPKG (343 aa)) is ligase. Residue 366–373 (GVSGGLDS) coordinates ATP. A deamido-NAD(+)-binding site is contributed by Asn-456. An ATP-binding site is contributed by Thr-480. Residues Glu-485, 490–493 (WSTY), and Lys-635 contribute to the deamido-NAD(+) site. Positions 639–658 (LPNGPKVSHGGALSPRGDWR) are disordered.

This sequence in the C-terminal section; belongs to the NAD synthetase family.

The catalysed reaction is deamido-NAD(+) + L-glutamine + ATP + H2O = L-glutamate + AMP + diphosphate + NAD(+) + H(+). It functions in the pathway cofactor biosynthesis; NAD(+) biosynthesis; NAD(+) from deamido-NAD(+) (L-Gln route): step 1/1. Functionally, catalyzes the ATP-dependent amidation of deamido-NAD to form NAD. Uses L-glutamine as a nitrogen source. The protein is Glutamine-dependent NAD(+) synthetase of Mycobacterium bovis (strain ATCC BAA-935 / AF2122/97).